A 101-amino-acid chain; its full sequence is NADH-quinone oxidoreductase subunit K (101 aa).

3 helical membrane passes run 4 to 24, 30 to 50, and 62 to 82; these read LGHLLVLGAALFCISLAGIFL, IVLLMSIELMLLAVNVNFIAF, and FVFFILTVAAAEAAIGLAILV.

The protein belongs to the complex I subunit 4L family. As to quaternary structure, NDH-1 is composed of 14 different subunits. Subunits NuoA, H, J, K, L, M, N constitute the membrane sector of the complex.

The protein resides in the cell inner membrane. The catalysed reaction is a quinone + NADH + 5 H(+)(in) = a quinol + NAD(+) + 4 H(+)(out). NDH-1 shuttles electrons from NADH, via FMN and iron-sulfur (Fe-S) centers, to quinones in the respiratory chain. The immediate electron acceptor for the enzyme in this species is believed to be ubiquinone. Couples the redox reaction to proton translocation (for every two electrons transferred, four hydrogen ions are translocated across the cytoplasmic membrane), and thus conserves the redox energy in a proton gradient. The polypeptide is NADH-quinone oxidoreductase subunit K (Xylella fastidiosa (strain 9a5c)).